A 338-amino-acid chain; its full sequence is Ribosomal RNA small subunit methyltransferase H (338 aa).

Residues 46–48 (GGY), Asp63, Phe90, Asp106, and Gln113 contribute to the S-adenosyl-L-methionine site.

It belongs to the methyltransferase superfamily. RsmH family.

Its subcellular location is the cytoplasm. It carries out the reaction cytidine(1402) in 16S rRNA + S-adenosyl-L-methionine = N(4)-methylcytidine(1402) in 16S rRNA + S-adenosyl-L-homocysteine + H(+). In terms of biological role, specifically methylates the N4 position of cytidine in position 1402 (C1402) of 16S rRNA. This is Ribosomal RNA small subunit methyltransferase H from Mesorhizobium japonicum (strain LMG 29417 / CECT 9101 / MAFF 303099) (Mesorhizobium loti (strain MAFF 303099)).